The chain runs to 372 residues: Cytochrome b (372 aa).

4 helical membrane-spanning segments follow: residues 25-45, 69-90, 105-125, and 170-190; these read FGSMLLTCSALQIMTGFFLAV, WMMQNLHAIGASMFFICIYIHM, WLSGTTLLIMLMATAFFGYVL, and FFALHFILPFGIISLSSLHIM. Heme b is bound by residues His75 and His89. Heme b is bound by residues His174 and His188. His193 is an a ubiquinone binding site. Transmembrane regions (helical) follow at residues 218–238, 280–300, 312–332, and 339–358; these read YKDLFMISSMIMIMLLTISFL, LGGALALAMSIMILLTVPFTH, FMQLMFWTLMATFIIITWTAT, and YTTISQVASTLYFMFFMSNL.

It belongs to the cytochrome b family. In terms of assembly, the cytochrome bc1 complex contains 3 respiratory subunits (MT-CYB, CYC1 and UQCRFS1), 2 core proteins (UQCRC1 and UQCRC2) and probably 6 low-molecular weight proteins. The cofactor is heme b.

It localises to the mitochondrion inner membrane. Component of the ubiquinol-cytochrome c reductase complex (complex III or cytochrome b-c1 complex) that is part of the mitochondrial respiratory chain. The b-c1 complex mediates electron transfer from ubiquinol to cytochrome c. Contributes to the generation of a proton gradient across the mitochondrial membrane that is then used for ATP synthesis. The polypeptide is Cytochrome b (MT-CYB) (Sanzinia madagascariensis (Madagascar tree boa)).